Consider the following 293-residue polypeptide: Putative ribose uptake protein RbsU (293 aa).

10 helical membrane passes run 5 to 24 (AILIGLGPLLGWGLFPTIAS), 34 to 51 (IFGATVGTLIFAIVLALF), 58 to 80 (GGMALVFSLISGAGWAFGQIITF), 95 to 114 (TTAFQLLGASLWGVFALGNW), 121 to 138 (IIGFLALLVILIGARMTV), 153 to 170 (SAVILLLVGEIGYWIYSA), 177 to 199 (IGGFKAFLPQAIGMVIVAVIYAL), 212 to 234 (VSWQQTISGFFFAFAALTYLISA), 241 to 263 (LATGFVLSQTSVVLATLTGIFFL), and 273 to 292 (MITIVGLVLILVAASITVFI).

The protein belongs to the GRP transporter (TC 2.A.7.5) family.

It is found in the cell membrane. In terms of biological role, could be involved in the uptake of ribose. The polypeptide is Putative ribose uptake protein RbsU (rbsU) (Staphylococcus epidermidis (strain ATCC 35984 / DSM 28319 / BCRC 17069 / CCUG 31568 / BM 3577 / RP62A)).